A 111-amino-acid chain; its full sequence is DNA-directed RNA polymerase subunit Rpo11 (111 aa).

The protein belongs to the archaeal Rpo11/eukaryotic RPB11/RPC19 RNA polymerase subunit family. Part of the RNA polymerase complex.

It localises to the cytoplasm. The catalysed reaction is RNA(n) + a ribonucleoside 5'-triphosphate = RNA(n+1) + diphosphate. Its function is as follows. DNA-dependent RNA polymerase (RNAP) catalyzes the transcription of DNA into RNA using the four ribonucleoside triphosphates as substrates. This is DNA-directed RNA polymerase subunit Rpo11 from Thermoplasma volcanium (strain ATCC 51530 / DSM 4299 / JCM 9571 / NBRC 15438 / GSS1).